The following is a 457-amino-acid chain: Putative metabolite transport protein YwtG (457 aa).

The next 12 membrane-spanning stretches (helical) occupy residues 7-27 (IWLY…TGVI), 38-58 (LGLN…GAIL), 75-95 (AIMA…LAPN), 97-117 (GVMV…TTIV), 136-156 (LNQL…YIFA), 163-183 (WMLG…LFMP), 240-260 (ALIA…NTII), 276-296 (ASIL…LVAI), 309-329 (LFGN…NLFF), 340-360 (VICL…VVWV), 377-397 (VSTL…PILM), and 400-420 (IGIS…FLFV). Residues 438-457 (DLRDKNGQGGAAGKQQTVGT) form a disordered region.

Belongs to the major facilitator superfamily. Sugar transporter (TC 2.A.1.1) family.

Its subcellular location is the cell membrane. This is Putative metabolite transport protein YwtG (ywtG) from Bacillus subtilis (strain 168).